Here is a 315-residue protein sequence, read N- to C-terminus: Glycine--tRNA ligase alpha subunit (315 aa).

Belongs to the class-II aminoacyl-tRNA synthetase family. In terms of assembly, tetramer of two alpha and two beta subunits.

The protein resides in the cytoplasm. It catalyses the reaction tRNA(Gly) + glycine + ATP = glycyl-tRNA(Gly) + AMP + diphosphate. This is Glycine--tRNA ligase alpha subunit from Pseudomonas putida (strain ATCC 47054 / DSM 6125 / CFBP 8728 / NCIMB 11950 / KT2440).